The primary structure comprises 202 residues: Heat shock 22 kDa protein, mitochondrial (202 aa).

The N-terminal 31 residues, 1–31, are a transit peptide targeting the mitochondrion; it reads MASSLALKRFLSSGLLSSSFLRPVASSASRS. Residues 94–202 form the sHSP domain; sequence VLSAASRRGW…RNNVINVKVD (109 aa).

The protein belongs to the small heat shock protein (HSP20) family.

Its subcellular location is the mitochondrion. The chain is Heat shock 22 kDa protein, mitochondrial (HSP22) from Pisum sativum (Garden pea).